The following is a 489-amino-acid chain: MYRLRALTAATVGMVQLTRRHHTGAFRSYQRRRLMLAALAGVTGISASAGLMWTRAYAEAGSSVKHEEQMREEEPLKDVAEEAESDGALESSSGEDEDEAGSEEKKKKQRIGFRDRKVMEYENRIRAYSTPDKIFRYFATLKIINEHGDAEVYMTPQDFVRSITPNEKQPENLGLDQFMVKRYDGKDFWQKISQDREKFADEDSIFYTLGECGLISFSDYIFLTTVLSTPQRNFEIAFKMFDLNGDGEVDLEEFEQVQSIIRSQTSMGMRHRDRSTTGNTLKTGGCSSALTTYFFGADLKGKLTISSFLEFQRKLQHDVLKLEFERNDPVDGRITEKQFGGMLLAYSGVQSRKLKQMQKNLKRMFKDAQGITFEEVENFFTFLKNVNDVDTALSFYHMAGASIDKATMKQVARTVAKVELSDHVCDVVFALFDCDGNGELSNKEFIAIMKQRLMRGLEKPKDMGFTRLVRAMWKCAQDTAWDFAMPKQQ.

Residues 1–34 (MYRLRALTAATVGMVQLTRRHHTGAFRSYQRRRL) constitute a mitochondrion transit peptide. The interval 62 to 109 (SSVKHEEQMREEEPLKDVAEEAESDGALESSSGEDEDEAGSEEKKKKQ) is disordered. The segment covering 64–80 (VKHEEQMREEEPLKDVA) has biased composition (basic and acidic residues). Acidic residues predominate over residues 81-101 (EEAESDGALESSSGEDEDEAG). The polybasic region stretch occupies residues 106–117 (KKKQRIGFRDRK). The segment at 133 to 136 (KIFR) is k/R-ring. The region spanning 229–264 (TPQRNFEIAFKMFDLNGDGEVDLEEFEQVQSIIRSQ) is the EF-hand 1 domain. The Ca(2+) site is built by D242, N244, D246, E248, and E253. Residues 270 to 274 (RHRDR) form a k/R-ring region. 2 EF-hand domains span residues 371–386 (ITFE…LKNV) and 420–455 (LSDH…RLMR). Ca(2+) contacts are provided by D433, D435, N437, E439, and E444. Positions 467-477 (RLVRAMWKCAQ) are C-helix region.

This sequence belongs to the MICU1 family. MICU1 subfamily. In terms of assembly, heterodimer; disulfide-linked; heterodimerizes with micu2. Component of the uniplex complex.

Its subcellular location is the mitochondrion intermembrane space. It localises to the mitochondrion inner membrane. In terms of biological role, calcium sensor of the mitochondrial calcium uniporter (mcu) channel, which senses calcium level via its EF-hand domains. micu1 and micu2 form a disulfide-linked heterodimer that stimulates and inhibits MCU activity, depending on the concentration of calcium. At low calcium levels, micu1 occludes the pore of the MCU channel, preventing mitochondrial calcium uptake. At higher calcium levels, calcium-binding to micu1 and micu2 induces a conformational change that weakens mcu-micu1 interactions and moves the micu1-micu2 heterodimer away from the pore, allowing calcium permeation through the mcu channel. Also required to protect against manganese toxicity by preventing manganese uptake by mcu. This Danio rerio (Zebrafish) protein is Calcium uptake protein 1, mitochondrial (micu1).